We begin with the raw amino-acid sequence, 215 residues long: Cytochrome b6 (215 aa).

The chain crosses the membrane as a helical span at residues 32–52; sequence IFYCLGGITLTCFLVQVATGF. Cysteine 35 is a heme c binding site. Heme b is bound by residues histidine 86 and histidine 100. A run of 3 helical transmembrane segments spans residues 90-110, 116-136, and 186-206; these read ASMM…TGGF, LTWV…VTGY, and LHTF…FLMI. Residues histidine 187 and histidine 202 each contribute to the heme b site.

This sequence belongs to the cytochrome b family. PetB subfamily. As to quaternary structure, the 4 large subunits of the cytochrome b6-f complex are cytochrome b6, subunit IV (17 kDa polypeptide, PetD), cytochrome f and the Rieske protein, while the 4 small subunits are PetG, PetL, PetM and PetN. The complex functions as a dimer. It depends on heme b as a cofactor. Heme c is required as a cofactor.

It localises to the plastid. It is found in the chloroplast thylakoid membrane. Its function is as follows. Component of the cytochrome b6-f complex, which mediates electron transfer between photosystem II (PSII) and photosystem I (PSI), cyclic electron flow around PSI, and state transitions. The chain is Cytochrome b6 from Oenothera elata subsp. hookeri (Hooker's evening primrose).